The following is a 791-amino-acid chain: Vezatin (791 aa).

The next 2 helical transmembrane spans lie at isoleucine 138–alanine 158 and serine 163–leucine 183. The stretch at valine 435–glutamate 464 forms a coiled coil. Residues glycine 752–tyrosine 769 are compositionally biased toward acidic residues. The tract at residues glycine 752 to glutamate 791 is disordered. Residues lysine 773–asparagine 783 show a composition bias toward basic and acidic residues.

The protein belongs to the vezatin family. In terms of assembly, interacts with myosin VIIa and the cadherin-catenins complex.

It localises to the cell membrane. The protein localises to the cell junction. Its subcellular location is the adherens junction. The protein resides in the nucleus. Plays a pivotal role in the establishment of adherens junctions and their maintenance in adult life. This is Vezatin (vezt) from Xenopus tropicalis (Western clawed frog).